The primary structure comprises 92 residues: UPF0358 protein SH1840 (92 aa).

The protein belongs to the UPF0358 family.

The protein is UPF0358 protein SH1840 of Staphylococcus haemolyticus (strain JCSC1435).